The sequence spans 249 residues: Transmembrane protein 51 (249 aa).

Helical transmembrane passes span 17 to 37 (IGLGMLVLGVIMAMWNLVPGF) and 64 to 84 (VAYVLVGAGMMLLLLAICLSI). 3 disordered regions span residues 95–126 (ELARIQQQAGTVPHSQEEDSQEEEEDVSSRYY), 161–199 (TGLDEATPTSTRAETETSPGHAPDRQNSKLAKRLKPLKV), and 213–249 (RITLPDKNVPPPSIEPLTPPPLYDEVQAKAPDARPPD). Polar residues predominate over residues 99 to 108 (IQQQAGTVPH). Phosphoserine occurs at positions 109, 114, 178, and 188. Polar residues predominate over residues 167 to 178 (TPTSTRAETETS). Residues 190-199 (LAKRLKPLKV) show a composition bias toward basic residues. The segment covering 220–234 (NVPPPSIEPLTPPPL) has biased composition (pro residues).

It localises to the membrane. The sequence is that of Transmembrane protein 51 (Tmem51) from Mus musculus (Mouse).